The chain runs to 805 residues: Probable inorganic carbon transporter subunit DabA (805 aa).

4 residues coordinate Zn(2+): cysteine 334, aspartate 336, histidine 491, and cysteine 506.

It belongs to the inorganic carbon transporter (TC 9.A.2) DabA family. In terms of assembly, forms a complex with DabB. Zn(2+) serves as cofactor.

It localises to the cell inner membrane. In terms of biological role, part of an energy-coupled inorganic carbon pump. This chain is Probable inorganic carbon transporter subunit DabA, found in Ruegeria sp. (strain TM1040) (Silicibacter sp.).